Reading from the N-terminus, the 318-residue chain is Pantothenate kinase (318 aa).

Residue 96–103 (GSVAVGKS) participates in ATP binding.

It belongs to the prokaryotic pantothenate kinase family.

The protein resides in the cytoplasm. It carries out the reaction (R)-pantothenate + ATP = (R)-4'-phosphopantothenate + ADP + H(+). It functions in the pathway cofactor biosynthesis; coenzyme A biosynthesis; CoA from (R)-pantothenate: step 1/5. This is Pantothenate kinase from Rhodopseudomonas palustris (strain ATCC BAA-98 / CGA009).